The sequence spans 437 residues: Zinc finger CCCH domain-containing protein 40 (437 aa).

The C3H1-type zinc-finger motif lies at 6–33 (MYKTKLCILFNKTGDCSRPNCTFAHGNA). The interval 35–107 (LRRPGESSFT…MPFENRRDKD (73 aa)) is disordered. Basic and acidic residues predominate over residues 48 to 85 (HNMDSDLRDRRHNMDSDLRDRLGRQFSPERRPSLDRSG). Residues 145–244 (NNVLEEQLKD…LGNQLSTYLA (100 aa)) adopt a coiled-coil conformation. Phosphoserine is present on serine 259. 2 disordered regions span residues 266 to 360 (RNLR…RRRF) and 380 to 437 (EFDD…DDSV). The segment covering 307 to 319 (RGEEEKVENEKKR) has biased composition (basic and acidic residues). 2 stretches are compositionally biased toward acidic residues: residues 333-343 (EEESGAWNDED) and 383-392 (DVAESEEENP). The segment covering 426-437 (MEQKKAYDDDSV) has biased composition (basic and acidic residues).

The polypeptide is Zinc finger CCCH domain-containing protein 40 (Arabidopsis thaliana (Mouse-ear cress)).